Here is a 223-residue protein sequence, read N- to C-terminus: Bone marrow proteoglycan (223 aa).

Positions 1–16 are cleaved as a signal peptide; it reads MKFPLLLALLVGGASA. A propeptide spans 17 to 106 (acidic); sequence LHLSSETSDS…TSLMGDSGCK (90 aa). The segment at 20–81 is disordered; that stretch reads SSETSDSKSP…PGDEGAVSGQ (62 aa). Thr-23 carries O-linked (GalNAc...) threonine; partial glycosylation. An O-linked (GalNAc...) serine glycan is attached at Ser-24. An O-linked (Xyl...) (chondroitin sulfate) serine glycan is attached at Ser-66. Residues 124 to 223 enclose the C-type lectin domain; the sequence is SVCRRCYRGT…VKRRPFICSY (100 aa). 2 cysteine pairs are disulfide-bonded: Cys-126-Cys-221 and Cys-198-Cys-213.

Nitrated.

It is found in the secreted. Cytotoxin and helminthotoxin. MBP also induces non-cytolytic histamine release from basophils. It is involved in antiparasitic defense mechanisms and immune hypersensitivity reactions. The chain is Bone marrow proteoglycan (Prg2) from Mus musculus (Mouse).